A 234-amino-acid chain; its full sequence is Zein-alpha GZ19AB11 (234 aa).

Positions 1–21 (MAAKIFCLLMLLGLSASAATA) are cleaved as a signal peptide.

This sequence belongs to the zein family.

Functionally, zeins are major seed storage proteins. The polypeptide is Zein-alpha GZ19AB11 (Zea mays (Maize)).